A 175-amino-acid chain; its full sequence is ATP synthase subunit delta (175 aa).

The protein belongs to the ATPase delta chain family. F-type ATPases have 2 components, F(1) - the catalytic core - and F(0) - the membrane proton channel. F(1) has five subunits: alpha(3), beta(3), gamma(1), delta(1), epsilon(1). F(0) has three main subunits: a(1), b(2) and c(10-14). The alpha and beta chains form an alternating ring which encloses part of the gamma chain. F(1) is attached to F(0) by a central stalk formed by the gamma and epsilon chains, while a peripheral stalk is formed by the delta and b chains.

Its subcellular location is the cell inner membrane. F(1)F(0) ATP synthase produces ATP from ADP in the presence of a proton or sodium gradient. F-type ATPases consist of two structural domains, F(1) containing the extramembraneous catalytic core and F(0) containing the membrane proton channel, linked together by a central stalk and a peripheral stalk. During catalysis, ATP synthesis in the catalytic domain of F(1) is coupled via a rotary mechanism of the central stalk subunits to proton translocation. Its function is as follows. This protein is part of the stalk that links CF(0) to CF(1). It either transmits conformational changes from CF(0) to CF(1) or is implicated in proton conduction. This chain is ATP synthase subunit delta, found in Sulfurovum sp. (strain NBC37-1).